Reading from the N-terminus, the 276-residue chain is Mitochondrial distribution and morphology protein 12 (276 aa).

An SMP-LTD domain is found at 1–276 (MSIDIQWNLL…FVWPSYFTLY (276 aa)). The disordered stretch occupies residues 68 to 104 (TLYSDDSSSLDDEESDREEENMTELPPYGATENGVHK). Over residues 75 to 89 (SSLDDEESDREEENM) the composition is skewed to acidic residues.

It belongs to the MDM12 family. As to quaternary structure, component of the ER-mitochondria encounter structure (ERMES) or MDM complex, composed of mmm1, mdm10, mdm12 and mdm34. A mmm1 homodimer associates with one molecule of mdm12 on each side in a pairwise head-to-tail manner, and the SMP-LTD domains of mmm1 and mdm12 generate a continuous hydrophobic tunnel for phospholipid trafficking.

Its subcellular location is the mitochondrion outer membrane. The protein resides in the endoplasmic reticulum membrane. Its function is as follows. Component of the ERMES/MDM complex, which serves as a molecular tether to connect the endoplasmic reticulum (ER) and mitochondria. Components of this complex are involved in the control of mitochondrial shape and protein biogenesis, and function in nonvesicular lipid trafficking between the ER and mitochondria. Mdm12 is required for the interaction of the ER-resident membrane protein mmm1 and the outer mitochondrial membrane-resident beta-barrel protein mdm10. The mdm12-mmm1 subcomplex functions in the major beta-barrel assembly pathway that is responsible for biogenesis of all mitochondrial outer membrane beta-barrel proteins, and acts in a late step after the SAM complex. The mdm10-mdm12-mmm1 subcomplex further acts in the TOM40-specific pathway after the action of the mdm12-mmm1 complex. Essential for establishing and maintaining the structure of mitochondria and maintenance of mtDNA nucleoids. The chain is Mitochondrial distribution and morphology protein 12 from Schizosaccharomyces japonicus (strain yFS275 / FY16936) (Fission yeast).